The sequence spans 338 residues: Structural protein VP9 (338 aa).

The protein resides in the virion. Plays an important role in virus transmission by the insect vector. May participate in the virus stability by binding clamp proteins and surrounding the pentameric turrets present in the virion. The polypeptide is Structural protein VP9 (Rice ragged stunt virus (isolate Thailand) (RRSV)).